The following is a 542-amino-acid chain: MRVLVIFIPKSFPNKCLHFKKLGLWIIFQASIKEKSNHQKEILTEQQQQQIINNHINNSISSENLVIPLNNYEESPTQSNISSCYSSQSNLSSYSSTGSLSSYYGSNYYHGASSSSISSINSNIANSNSSSTGRDSTPTPTPTPIQTPSSTPSKKKRSWRIRTPSPKPKLESNNNHHHNHHNYYNNFSEISIELPPTPTYPQKPSFLSNSNQIPRPKSRHSHTNSADSYTSSYSSTYPSSTRSSQKQPPYYQQPINNKNNNNNNNINNFNFNGNNNNNNNNNNNNNNNNNNNNNNNNNNNNNNSNNMKISTSPNKLSNSNHSTNSNFSQCSSSHSLLDTNIGGINVNTQNLVSFTNETSNSGSTIIKPVALKSSSRSVFNSSNNQQYLFSSSTLSSSSSTKTNNNSTTTTTTTTAKTSSTSTNDYSSIKGKSLIDDDASCSISSFNAIEQQVLIPTVLSSSSSSHVMKRSNGSSNGGNSTIQSPSCNQISINKNNLVDIDDEDEDDEDDINGHWEKITIPSNMCRDQISIKNNFDESTKVIC.

Over residues 125 to 138 the composition is skewed to low complexity; it reads ANSNSSSTGRDSTP. Disordered regions lie at residues 125–182, 194–333, 390–428, and 459–487; these read ANSN…NHHN, LPPT…CSSS, SSSTLSSSSSTKTNNNSTTTTTTTTAKTSSTSTNDYSSI, and SSSSSSHVMKRSNGSSNGGNSTIQSPSCN. The segment covering 202–213 has biased composition (polar residues); the sequence is QKPSFLSNSNQI. 4 stretches are compositionally biased toward low complexity: residues 228–306, 314–333, 390–423, and 459–479; these read SYTS…NSNN, NKLSNSNHSTNSNFSQCSSS, SSSTLSSSSSTKTNNNSTTTTTTTTAKTSSTSTN, and SSSSSSHVMKRSNGSSNGGNS.

This is an uncharacterized protein from Dictyostelium discoideum (Social amoeba).